The sequence spans 295 residues: 33 kDa chaperonin (295 aa).

2 disulfide bridges follow: Cys-233–Cys-235 and Cys-267–Cys-270.

Belongs to the HSP33 family. Post-translationally, under oxidizing conditions two disulfide bonds are formed involving the reactive cysteines. Under reducing conditions zinc is bound to the reactive cysteines and the protein is inactive.

The protein localises to the cytoplasm. Its function is as follows. Redox regulated molecular chaperone. Protects both thermally unfolding and oxidatively damaged proteins from irreversible aggregation. Plays an important role in the bacterial defense system toward oxidative stress. This chain is 33 kDa chaperonin, found in Mannheimia succiniciproducens (strain KCTC 0769BP / MBEL55E).